The sequence spans 419 residues: DNA ligase (419 aa).

The segment at 1–120 (MLNHFPGHCS…ARQKRGAHTN (120 aa)) is NTD. Residues 121–317 (RGMIPPMLVK…NYHSAHLAKL (197 aa)) form an AD domain region. Lysine 151 (N6-AMP-lysine intermediate) is an active-site residue. ATP-binding residues include lysine 151, glutamate 203, and phenylalanine 232. Glutamate 203 is a binding site for a divalent metal cation. An a divalent metal cation-binding site is contributed by glutamate 291. The ATP site is built by isoleucine 294 and lysine 316. Positions 318 to 419 (KPLLDAEFIL…REPINVLEII (102 aa)) are OB domain.

The protein belongs to the ATP-dependent DNA ligase family.

It is found in the virion. The enzyme catalyses ATP + (deoxyribonucleotide)n-3'-hydroxyl + 5'-phospho-(deoxyribonucleotide)m = (deoxyribonucleotide)n+m + AMP + diphosphate.. Very low-fidelity DNA ligase that seals nicks in double-stranded DNA during DNA repair. Together with the viral repair DNA polymerase X, fills the single nucleotide gaps generated by the AP endonuclease. It is not essential for viral replication and recombination. Displays a very low adenylation activity towards DNA with 3'-dideoxy- or 3'-amino-terminated nicks compared to regular nick DNA. The polypeptide is DNA ligase (African swine fever virus (isolate Tick/South Africa/Pretoriuskop Pr4/1996) (ASFV)).